We begin with the raw amino-acid sequence, 234 residues long: MAKLTKRMRVIRDKVDVTKQYDINEAVALLKELATAKFVESVDVAVNLGIDARKSDQNVRGATVLPHGTGRSVRVAVFTQGANAEAAKAAGAEFVGMEDLADQIKKGEMGFDVVIASPDAMRVVGQLGQLLGPRGLMPNPKVGTVTPNVAEAVNNAKAGQVRYRNDKNGIIHTTIGKVDFDSDKLKENLESLLVALKKAKPSQAKGVYIKKVSLSTTMGAGVSIDQSGLNAVAN.

The protein belongs to the universal ribosomal protein uL1 family. Part of the 50S ribosomal subunit.

In terms of biological role, binds directly to 23S rRNA. The L1 stalk is quite mobile in the ribosome, and is involved in E site tRNA release. Protein L1 is also a translational repressor protein, it controls the translation of the L11 operon by binding to its mRNA. The chain is Large ribosomal subunit protein uL1 from Pectobacterium atrosepticum (strain SCRI 1043 / ATCC BAA-672) (Erwinia carotovora subsp. atroseptica).